Here is a 153-residue protein sequence, read N- to C-terminus: Large ribosomal subunit protein uL15 (153 aa).

Residues 21-41 (RGIGSGKGKTGGRGIKGQKSR) form a disordered region. Residues 23-35 (IGSGKGKTGGRGI) are compositionally biased toward gly residues.

Belongs to the universal ribosomal protein uL15 family. In terms of assembly, part of the 50S ribosomal subunit.

Functionally, binds to the 23S rRNA. This chain is Large ribosomal subunit protein uL15, found in Rickettsia rickettsii (strain Iowa).